We begin with the raw amino-acid sequence, 232 residues long: Flavin-dependent thymidylate synthase (232 aa).

Residues Met1–Gly204 form the ThyX domain. FAD-binding positions include Ser55, Arg79–Arg81, and Gln87. DUMP contacts are provided by residues Gln76–Arg79, Gln87–Arg91, and Arg143. Residues Arg79–Ser89 carry the ThyX motif motif. Residues Asn159–Arg161 and His165 each bind FAD. Residue Arg170 participates in dUMP binding. Arg170 acts as the Involved in ionization of N3 of dUMP, leading to its activation in catalysis.

The protein belongs to the thymidylate synthase ThyX family. As to quaternary structure, homotetramer. Requires FAD as cofactor.

It catalyses the reaction dUMP + (6R)-5,10-methylene-5,6,7,8-tetrahydrofolate + NADPH + H(+) = dTMP + (6S)-5,6,7,8-tetrahydrofolate + NADP(+). Its pathway is pyrimidine metabolism; dTTP biosynthesis. Functionally, catalyzes the reductive methylation of 2'-deoxyuridine-5'-monophosphate (dUMP) to 2'-deoxythymidine-5'-monophosphate (dTMP) while utilizing 5,10-methylenetetrahydrofolate (mTHF) as the methyl donor, and NADPH and FADH(2) as the reductant. The polypeptide is Flavin-dependent thymidylate synthase (Geobacter sulfurreducens (strain ATCC 51573 / DSM 12127 / PCA)).